Reading from the N-terminus, the 205-residue chain is MKKELILKALKLRDMGFPSGDIAEELNISVKTALYLTLNGEELLKAGETPKEDSEKLDIFLEWDNVRASSRRLRNISKIICDMLSDVEFDGVVGISSGGVPLATLISDELDKNFSIYVPKKHVHTEKEKTTGFIGQNMSSIVGKDVIIVDDVMTSGNSVKETIKYLKGIANPKKVFVVMDKSGIDEIDGVRIEHLFRTGVVDIKK.

The protein belongs to the purine/pyrimidine phosphoribosyltransferase family. GfcR subfamily.

The protein is Transcriptional regulator GfcR of Methanococcus maripaludis (strain C7 / ATCC BAA-1331).